Here is a 443-residue protein sequence, read N- to C-terminus: SAM50-like protein CG7639 (443 aa).

One can recognise a POTRA domain in the interval 23 to 101; the sequence is ARVDRVNVSG…QGYEVTFKGN (79 aa).

Belongs to the SAM50/omp85 family. As to quaternary structure, associates with the mitochondrial contact site and cristae organizing system (MICOS) complex (also known as MINOS or MitOS complex).

Its subcellular location is the mitochondrion outer membrane. May play a role in the maintenance of the structure of mitochondrial cristae. The sequence is that of SAM50-like protein CG7639 from Drosophila melanogaster (Fruit fly).